Here is a 246-residue protein sequence, read N- to C-terminus: Sulfate transporter CysZ (246 aa).

4 consecutive transmembrane segments (helical) span residues 24–44 (LFVL…IGFA), 69–89 (IVWP…FTMV), 148–168 (LLVL…WILF), and 214–234 (LLIP…ATLF).

It belongs to the CysZ family.

Its subcellular location is the cell inner membrane. Functionally, high affinity, high specificity proton-dependent sulfate transporter, which mediates sulfate uptake. Provides the sulfur source for the cysteine synthesis pathway. In Pseudomonas aeruginosa (strain LESB58), this protein is Sulfate transporter CysZ.